The following is a 388-amino-acid chain: MNLHEYQAKSLFAEYGLPVSEGFACDTAQEAVEAAGHIGGNLWVVKCQVHAGGRGKAGGVKVTGDKEEIRAFAEHWLGKNLVTYQTDEKGQPVAKILVESCTDIANELYLGAVVDRATRRVVFMASTEGGVEIEKVAEETPELIHTAIIDPLTGPQGYQARDLGFKLGLNPTQMKQFTKIFMGLATMFVDHDFALLEINPLVITTEGNLHCLDGKIGIDGNALYRQPKIKGMHDPSQDDAREAHAAKFELNYVALDGNVGCMVNGAGLAMGTMDIVNLHGGKPANFLDVGGGATKERVAEAFKIILSDSNVKAVLVNIFGGIVRCDMIAEGIIGAVKEVGVKVPVVVRLEGTNAELGREVLAKSGLDIIAATSLTDAAEQVVKAAEGK.

The region spanning 9 to 244 (KSLFAEYGLP…PSQDDAREAH (236 aa)) is the ATP-grasp domain. ATP-binding positions include Lys-46, 53-55 (GRG), Glu-99, Thr-102, and Glu-107. Residues Asn-199 and Asp-213 each contribute to the Mg(2+) site. Residues Asn-264 and 321 to 323 (GIV) each bind substrate.

This sequence belongs to the succinate/malate CoA ligase beta subunit family. Heterotetramer of two alpha and two beta subunits. Mg(2+) is required as a cofactor.

It catalyses the reaction succinate + ATP + CoA = succinyl-CoA + ADP + phosphate. The enzyme catalyses GTP + succinate + CoA = succinyl-CoA + GDP + phosphate. Its pathway is carbohydrate metabolism; tricarboxylic acid cycle; succinate from succinyl-CoA (ligase route): step 1/1. Its function is as follows. Succinyl-CoA synthetase functions in the citric acid cycle (TCA), coupling the hydrolysis of succinyl-CoA to the synthesis of either ATP or GTP and thus represents the only step of substrate-level phosphorylation in the TCA. The beta subunit provides nucleotide specificity of the enzyme and binds the substrate succinate, while the binding sites for coenzyme A and phosphate are found in the alpha subunit. This Shewanella baltica (strain OS195) protein is Succinate--CoA ligase [ADP-forming] subunit beta.